Consider the following 575-residue polypeptide: Alpha-(1,6)-fucosyltransferase (575 aa).

Over 1–9 the chain is Cytoplasmic; that stretch reads MRAWTGSWR. Residues 10 to 30 form a helical; Signal-anchor for type II membrane protein membrane-spanning segment; that stretch reads WIMLILFAWGTLLFYIGGHLV. Over 31 to 575 the chain is Lumenal; the sequence is RDNDHPDHSS…KYPTYPEAEK (545 aa). 3 disulfide bridges follow: Cys-204/Cys-266, Cys-212/Cys-230, and Cys-218/Cys-222. The region spanning 206–493 is the GT23 domain; it reads KARKLVCNIN…PDASANFHSL (288 aa). Residue Ser-278 is modified to Phosphoserine. Positions 299 to 305 match the SH3-binding motif; that stretch reads PRPPYLP. Residues 365 to 366 are important for donor substrate binding; sequence RR. The cysteines at positions 465 and 472 are disulfide-linked. Positions 502–563 constitute an SH3 domain; the sequence is QNAHNQIAVY…PSYKVREKIE (62 aa).

Belongs to the glycosyltransferase 23 family. In terms of processing, tyrosine phosphorylated by PKDCC/VLK.

The protein localises to the golgi apparatus. The protein resides in the golgi stack membrane. The enzyme catalyses N(4)-{beta-D-GlcNAc-(1-&gt;2)-alpha-D-Man-(1-&gt;3)-[beta-D-GlcNAc-(1-&gt;2)-alpha-D-Man-(1-&gt;6)]-beta-D-Man-(1-&gt;4)-beta-D-GlcNAc-(1-&gt;4)-beta-D-GlcNAc}-L-asparaginyl-[protein] + GDP-beta-L-fucose = an N(4)-{beta-D-GlcNAc-(1-&gt;2)-alpha-D-Man-(1-&gt;3)-[beta-D-GlcNAc-(1-&gt;2)-alpha-D-Man-(1-&gt;6)]-beta-D-Man-(1-&gt;4)-beta-D-GlcNAc-(1-&gt;4)-[alpha-L-Fuc-(1-&gt;6)]-beta-D-GlcNAc}-L-asparaginyl-[protein] + GDP + H(+). Its pathway is protein modification; protein glycosylation. Catalyzes the addition of fucose in alpha 1-6 linkage to the first GlcNAc residue, next to the peptide chains in N-glycans. In Mus musculus (Mouse), this protein is Alpha-(1,6)-fucosyltransferase (Fut8).